A 476-amino-acid polypeptide reads, in one-letter code: Serine/threonine-protein kinase Chk1 (476 aa).

Residues 1-265 (MAVPFVEDWD…IPDIKKDRWY (265 aa)) form an interaction with CLSPN region. Residues 9 to 265 (WDLVQTLGEG…IPDIKKDRWY (257 aa)) enclose the Protein kinase domain. ATP is bound by residues 15–23 (LGEGAYGEV) and lysine 38. Aspartate 130 (proton acceptor) is an active-site residue. Lysine 132 is covalently cross-linked (Glycyl lysine isopeptide (Lys-Gly) (interchain with G-Cter in ubiquitin)). The interval 270 to 327 (KKGAKRPRVTSGGVSESPSGFSKHIQSNLDFSPVNSASSEENVKYSSSQPEPRTGLSL) is disordered. Phosphoserine is present on residues serine 280, serine 286, serine 296, and serine 301. Positions 281 to 320 (GGVSESPSGFSKHIQSNLDFSPVNSASSEENVKYSSSQPE) are enriched in polar residues. Residue serine 317 is modified to Phosphoserine; by ATM and ATR. The residue at position 331 (serine 331) is a Phosphoserine. A Phosphoserine; by ATM and ATR modification is found at serine 345. Residues 391–476 (QCLKETCEKL…SSQKIWLPAT (86 aa)) form an autoinhibitory region region. Residue lysine 436 forms a Glycyl lysine isopeptide (Lys-Gly) (interchain with G-Cter in ubiquitin) linkage. 2 positions are modified to phosphoserine: serine 467 and serine 468.

The protein belongs to the protein kinase superfamily. CAMK Ser/Thr protein kinase family. NIM1 subfamily. Interacts (phosphorylated by ATR) with RAD51. Interacts with and phosphorylates CLSPN, an adapter protein that regulates the ATR-dependent phosphorylation of CHEK1. Interacts with BRCA1. Interacts with and phosphorylates CDC25A, CDC25B and CDC25C. Interacts with FBXO6, which regulates CHEK1. Interacts with PPM1D, which regulates CHEK1 through dephosphorylation. Interacts with TIMELESS; DNA damage-dependent. Interacts with FEM1B; activates CHEK1 in response to stress. Interacts with TLK1. Interacts with XPO1 and YWHAZ. Interacts with CDK5RAP3; antagonizes CHEK1. As to quaternary structure, isoform 1 associates with isoform 2, the interaction is disrupted upon phosphorylation by ATR. In terms of processing, phosphorylated by ATR in a RAD17-dependent manner in response to ultraviolet irradiation and inhibition of DNA replication. Phosphorylated by ATM in response to ionizing irradiation. ATM and ATR can both phosphorylate Ser-317 and Ser-345 and this results in enhanced kinase activity. Phosphorylation at Ser-345 induces a change in the conformation of the protein, activates the kinase activity and is a prerequisite for interaction with FBXO6 and subsequent ubiquitination at Lys-436. Phosphorylation at Ser-345 also increases binding to 14-3-3 proteins and promotes nuclear retention. Conversely, dephosphorylation at Ser-345 by PPM1D may contribute to exit from checkpoint mediated cell cycle arrest. Phosphorylation at Ser-280 by AKT1/PKB, may promote mono and/or diubiquitination. Also phosphorylated at undefined residues during mitotic arrest, resulting in decreased activity. Post-translationally, ubiquitinated. Mono or diubiquitination promotes nuclear exclusion. The activated form (phosphorylated on Ser-345) is polyubiquitinated at Lys-436 by some SCF-type E3 ubiquitin ligase complex containing FBXO6 promoting its degradation. Ubiquitination and degradation are required to terminate the checkpoint and ensure that activated CHEK1 does not accumulate as cells progress through S phase, when replication forks encounter transient impediments during normal DNA replication. 'Lys-63'-mediated ubiquitination by TRAF4 at Lys-132 activates cell cycle arrest and activation of DNA repair. Proteolytically cleaved at the C-terminus by SPRTN during normal DNA replication, thereby promoting CHEK1 removal from chromatin and activating the protein kinase activity. As to expression, expressed ubiquitously with the most abundant expression in thymus, testis, small intestine and colon.

The protein resides in the nucleus. Its subcellular location is the chromosome. It is found in the cytoplasm. It localises to the cytoskeleton. The protein localises to the microtubule organizing center. The protein resides in the centrosome. The enzyme catalyses L-seryl-[protein] + ATP = O-phospho-L-seryl-[protein] + ADP + H(+). It carries out the reaction L-threonyl-[protein] + ATP = O-phospho-L-threonyl-[protein] + ADP + H(+). Activated through phosphorylation predominantly by ATR but also by ATM in response to DNA damage or inhibition of DNA replication. Activation is modulated by several mediators including CLSPN, BRCA1 and FEM1B. Proteolytic cleavage at the C-terminus by SPRTN during normal DNA replication activates the protein kinase activity. Its function is as follows. Serine/threonine-protein kinase which is required for checkpoint-mediated cell cycle arrest and activation of DNA repair in response to the presence of DNA damage or unreplicated DNA. May also negatively regulate cell cycle progression during unperturbed cell cycles. This regulation is achieved by a number of mechanisms that together help to preserve the integrity of the genome. Recognizes the substrate consensus sequence [R-X-X-S/T]. Binds to and phosphorylates CDC25A, CDC25B and CDC25C. Phosphorylation of CDC25A at 'Ser-178' and 'Thr-507' and phosphorylation of CDC25C at 'Ser-216' creates binding sites for 14-3-3 proteins which inhibit CDC25A and CDC25C. Phosphorylation of CDC25A at 'Ser-76', 'Ser-124', 'Ser-178', 'Ser-279' and 'Ser-293' promotes proteolysis of CDC25A. Phosphorylation of CDC25A at 'Ser-76' primes the protein for subsequent phosphorylation at 'Ser-79', 'Ser-82' and 'Ser-88' by NEK11, which is required for polyubiquitination and degradation of CDCD25A. Inhibition of CDC25 leads to increased inhibitory tyrosine phosphorylation of CDK-cyclin complexes and blocks cell cycle progression. Also phosphorylates NEK6. Binds to and phosphorylates RAD51 at 'Thr-309', which promotes the release of RAD51 from BRCA2 and enhances the association of RAD51 with chromatin, thereby promoting DNA repair by homologous recombination. Phosphorylates multiple sites within the C-terminus of TP53, which promotes activation of TP53 by acetylation and promotes cell cycle arrest and suppression of cellular proliferation. Also promotes repair of DNA cross-links through phosphorylation of FANCE. Binds to and phosphorylates TLK1 at 'Ser-743', which prevents the TLK1-dependent phosphorylation of the chromatin assembly factor ASF1A. This may enhance chromatin assembly both in the presence or absence of DNA damage. May also play a role in replication fork maintenance through regulation of PCNA. May regulate the transcription of genes that regulate cell-cycle progression through the phosphorylation of histones. Phosphorylates histone H3.1 (to form H3T11ph), which leads to epigenetic inhibition of a subset of genes. May also phosphorylate RB1 to promote its interaction with the E2F family of transcription factors and subsequent cell cycle arrest. Phosphorylates SPRTN, promoting SPRTN recruitment to chromatin. Reduces replication stress and activates the G2/M checkpoint, by phosphorylating and inactivating PABIR1/FAM122A and promoting the serine/threonine-protein phosphatase 2A-mediated dephosphorylation and stabilization of WEE1 levels and activity. Endogenous repressor of isoform 1, interacts with, and antagonizes CHK1 to promote the S to G2/M phase transition. The sequence is that of Serine/threonine-protein kinase Chk1 (CHEK1) from Homo sapiens (Human).